The primary structure comprises 152 residues: Type-1 angiotensin II receptor-associated protein (152 aa).

The Extracellular portion of the chain corresponds to 1 to 23 (MELPAVNLKVILLGHWLLTTWGC). The helical transmembrane segment at 24-44 (IVFSGSYAWANFTILALGVWA) threads the bilayer. Over 45 to 55 (VAQRDSIDAIS) the chain is Cytoplasmic. The helical transmembrane segment at 56 to 76 (MFLGGLLATIFLDIVHISIFY) threads the bilayer. Residues 77 to 86 (PRAGLTDTGR) lie on the Extracellular side of the membrane. A helical transmembrane segment spans residues 87–107 (FGAGMAILSLLLKPLSCCFVY). Topologically, residues 108 to 152 (HMYRQRGGFLGSSQDRSAYQTIDSAEAPANAFAVPEGRGQDARGY) are cytoplasmic. 2 positions are modified to phosphoserine: Ser119 and Ser120. Thr128 is subject to Phosphothreonine. Ser131 bears the Phosphoserine mark.

Interacts with RACK1, and with the carboxy-terminal region of AGTR1.

Its subcellular location is the endoplasmic reticulum membrane. It localises to the golgi apparatus membrane. The protein resides in the cytoplasmic vesicle membrane. Appears to be a negative regulator of type-1 angiotensin II receptor-mediated signaling by regulating receptor internalization as well as mechanism of receptor desensitization such as phosphorylation. Also induces a decrease in cell proliferation and angiotensin II-stimulated transcriptional activity. This is Type-1 angiotensin II receptor-associated protein (AGTRAP) from Pongo abelii (Sumatran orangutan).